The primary structure comprises 262 residues: Adenosylcobinamide-GDP ribazoletransferase (262 aa).

6 helical membrane passes run 11–31 (LNLF…SWVI), 43–63 (YFGL…WFTQ), 66–86 (LPTS…TGGF), 121–141 (AIVL…LALF), 146–166 (AITG…SLIF), and 199–219 (IFVL…SLWA).

The protein belongs to the CobS family. Mg(2+) serves as cofactor.

The protein resides in the cell inner membrane. The catalysed reaction is alpha-ribazole + adenosylcob(III)inamide-GDP = adenosylcob(III)alamin + GMP + H(+). It carries out the reaction alpha-ribazole 5'-phosphate + adenosylcob(III)inamide-GDP = adenosylcob(III)alamin 5'-phosphate + GMP + H(+). The protein operates within cofactor biosynthesis; adenosylcobalamin biosynthesis; adenosylcobalamin from cob(II)yrinate a,c-diamide: step 7/7. Joins adenosylcobinamide-GDP and alpha-ribazole to generate adenosylcobalamin (Ado-cobalamin). Also synthesizes adenosylcobalamin 5'-phosphate from adenosylcobinamide-GDP and alpha-ribazole 5'-phosphate. The polypeptide is Adenosylcobinamide-GDP ribazoletransferase (Shewanella denitrificans (strain OS217 / ATCC BAA-1090 / DSM 15013)).